A 475-amino-acid chain; its full sequence is Cytochrome c-552 (475 aa).

A signal peptide spans 1 to 29 (MSIKHWMSAPIAVATLFASQLLLAGSVLA). The disordered stretch occupies residues 38–57 (PRNDAFEQKHPDQYHSWKAT). His-92 serves as a coordination point for heme c. Heme is bound by residues Cys-120, Cys-123, and Lys-124. Residues Cys-158, Cys-161, His-162, Cys-207, Cys-210, and His-211 each contribute to the heme c site. Ca(2+) contacts are provided by Glu-213, Tyr-214, Lys-259, and Gln-261. Tyr-214 is a binding site for substrate. His-262 is a substrate binding site. Residues His-273, Cys-280, Cys-283, His-284, His-299, Cys-312, Cys-315, His-316, and His-391 each coordinate heme c.

Belongs to the cytochrome c-552 family. Requires Ca(2+) as cofactor. Heme c is required as a cofactor.

The protein resides in the periplasm. It carries out the reaction 6 Fe(III)-[cytochrome c] + NH4(+) + 2 H2O = 6 Fe(II)-[cytochrome c] + nitrite + 8 H(+). It participates in nitrogen metabolism; nitrate reduction (assimilation). In terms of biological role, catalyzes the reduction of nitrite to ammonia, consuming six electrons in the process. This is Cytochrome c-552 from Vibrio parahaemolyticus serotype O3:K6 (strain RIMD 2210633).